The following is a 918-amino-acid chain: UPF0182 protein CPR_0011 (918 aa).

7 consecutive transmembrane segments (helical) span residues 8-28, 46-66, 91-111, 151-171, 200-220, 243-263, and 271-291; these read TVLISILLLVVVFFVSTNFII, LIAICKLFVPIFILYFCVIAI, FLLSNLVISILGAGATATTQW, AISLIIILVLITVIIYLALGF, LAVLASVLSLLIGCSYLLKSY, IFYKVIAIACVISSIVVFISI, and IIISIASIAVLIVLEPVVAIF.

This sequence belongs to the UPF0182 family.

The protein localises to the cell membrane. This chain is UPF0182 protein CPR_0011, found in Clostridium perfringens (strain SM101 / Type A).